The sequence spans 176 residues: Isopentenyl-diphosphate Delta-isomerase 1 (176 aa).

Mn(2+) is bound by residues His23 and His30. Residues 28–162 (HLHRAFSCFI…EEFCTPWFKK (135 aa)) enclose the Nudix hydrolase domain. Cys65 is a catalytic residue. Residue Cys65 coordinates Mg(2+). His67 contributes to the Mn(2+) binding site. Glu85 contacts Mg(2+). The Mn(2+) site is built by Glu112 and Glu114. Glu114 is an active-site residue.

It belongs to the IPP isomerase type 1 family. As to quaternary structure, homodimer. Mg(2+) is required as a cofactor. Requires Mn(2+) as cofactor.

The protein localises to the cytoplasm. The enzyme catalyses isopentenyl diphosphate = dimethylallyl diphosphate. It functions in the pathway isoprenoid biosynthesis; dimethylallyl diphosphate biosynthesis; dimethylallyl diphosphate from isopentenyl diphosphate: step 1/1. In terms of biological role, catalyzes the 1,3-allylic rearrangement of the homoallylic substrate isopentenyl (IPP) to its highly electrophilic allylic isomer, dimethylallyl diphosphate (DMAPP). This is Isopentenyl-diphosphate Delta-isomerase 1 from Photorhabdus laumondii subsp. laumondii (strain DSM 15139 / CIP 105565 / TT01) (Photorhabdus luminescens subsp. laumondii).